A 182-amino-acid polypeptide reads, in one-letter code: NADH-quinone oxidoreductase subunit I (182 aa).

4Fe-4S ferredoxin-type domains lie at 52–82 (LTRD…LQKA) and 92–121 (EFFR…LTPD). The [4Fe-4S] cluster site is built by Cys62, Cys65, Cys68, Cys72, Cys101, Cys104, Cys107, and Cys111.

This sequence belongs to the complex I 23 kDa subunit family. NDH-1 is composed of 13 different subunits. Subunits NuoA, H, J, K, L, M, N constitute the membrane sector of the complex. The cofactor is [4Fe-4S] cluster.

It localises to the cell inner membrane. The enzyme catalyses a quinone + NADH + 5 H(+)(in) = a quinol + NAD(+) + 4 H(+)(out). Its function is as follows. NDH-1 shuttles electrons from NADH, via FMN and iron-sulfur (Fe-S) centers, to quinones in the respiratory chain. The immediate electron acceptor for the enzyme in this species is believed to be ubiquinone. Couples the redox reaction to proton translocation (for every two electrons transferred, four hydrogen ions are translocated across the cytoplasmic membrane), and thus conserves the redox energy in a proton gradient. The sequence is that of NADH-quinone oxidoreductase subunit I from Pseudomonas putida (strain ATCC 47054 / DSM 6125 / CFBP 8728 / NCIMB 11950 / KT2440).